The following is a 232-amino-acid chain: Orotate phosphoribosyltransferase (232 aa).

5-phospho-alpha-D-ribose 1-diphosphate-binding positions include R107, K108, K111, H113, and 133–141 (EDLTTAGGS). An orotate-binding site is contributed by T137.

It belongs to the purine/pyrimidine phosphoribosyltransferase family. PyrE subfamily. As to quaternary structure, homodimer. It depends on Mg(2+) as a cofactor.

It catalyses the reaction orotidine 5'-phosphate + diphosphate = orotate + 5-phospho-alpha-D-ribose 1-diphosphate. The protein operates within pyrimidine metabolism; UMP biosynthesis via de novo pathway; UMP from orotate: step 1/2. Its function is as follows. Catalyzes the transfer of a ribosyl phosphate group from 5-phosphoribose 1-diphosphate to orotate, leading to the formation of orotidine monophosphate (OMP). The sequence is that of Orotate phosphoribosyltransferase from Sinorhizobium medicae (strain WSM419) (Ensifer medicae).